The sequence spans 160 residues: Ribosomal RNA large subunit methyltransferase H (160 aa).

Positions 76 and 108 each coordinate S-adenosyl-L-methionine.

This sequence belongs to the RNA methyltransferase RlmH family. In terms of assembly, homodimer.

The protein localises to the cytoplasm. The enzyme catalyses pseudouridine(1915) in 23S rRNA + S-adenosyl-L-methionine = N(3)-methylpseudouridine(1915) in 23S rRNA + S-adenosyl-L-homocysteine + H(+). In terms of biological role, specifically methylates the pseudouridine at position 1915 (m3Psi1915) in 23S rRNA. The sequence is that of Ribosomal RNA large subunit methyltransferase H from Bradyrhizobium diazoefficiens (strain JCM 10833 / BCRC 13528 / IAM 13628 / NBRC 14792 / USDA 110).